A 106-amino-acid chain; its full sequence is Colipase A (106 aa).

An N-terminal signal peptide occupies residues 1-11 (LLLVALAVAYA). Residues 12-16 (VPDPR) constitute a propeptide, enterostatin, activation peptide. 5 cysteine pairs are disulfide-bonded: cysteine 28-cysteine 39, cysteine 34-cysteine 50, cysteine 38-cysteine 72, cysteine 60-cysteine 80, and cysteine 74-cysteine 98. Tryptophan 63 is a binding site for taurodeoxycholate.

This sequence belongs to the colipase family. Forms a 1:1 stoichiometric complex with pancreatic lipase. In terms of tissue distribution, expressed by the pancreas.

Its subcellular location is the secreted. Colipase is a cofactor of pancreatic lipase. It allows the lipase to anchor itself to the lipid-water interface. Without colipase the enzyme is washed off by bile salts, which have an inhibitory effect on the lipase. Its function is as follows. Enterostatin has a biological activity as a satiety signal. The polypeptide is Colipase A (CLPS1) (Equus caballus (Horse)).